The primary structure comprises 161 residues: Cyclic pyranopterin monophosphate synthase (161 aa).

Substrate contacts are provided by residues 75–77 (LCH) and 113–114 (ME). D128 is an active-site residue.

It belongs to the MoaC family. As to quaternary structure, homohexamer; trimer of dimers.

It catalyses the reaction (8S)-3',8-cyclo-7,8-dihydroguanosine 5'-triphosphate = cyclic pyranopterin phosphate + diphosphate. Its pathway is cofactor biosynthesis; molybdopterin biosynthesis. Catalyzes the conversion of (8S)-3',8-cyclo-7,8-dihydroguanosine 5'-triphosphate to cyclic pyranopterin monophosphate (cPMP). The sequence is that of Cyclic pyranopterin monophosphate synthase from Shigella sonnei (strain Ss046).